Reading from the N-terminus, the 522-residue chain is MKDTLPSATQVLKEAFDTLDSALENFSPVLAVQHVGWVEYIGKGIARVGGLPGVRCEELLAFPGGLLGLALDADEDQVGVVLFGDYTHLQAGDEVRRTGRVLDVPVGDGLIGRVVNPVGRCLDGGKPVAFQRQLPVERPAPPIMDRLPVTQPLMTGIKVIDALIPIGRGQRELILGDRQTGKTAIAIDAIINQRDQDVVCIYCAIGQRAASVAGVVTELRNCGALDYTIVVVAEGDAPPGLQYIAPYAATSMAEHFMEHGRDVLIVYDDLTRHARAYREISLLLRRPPGREAFPGDIFYVHSRLLERATHLNEPRGGGSLTALPIIETEAQNLSAYIPTNLISITDGQIYLSPELFQKGLLPSVDVGKSVSRVGGKTQLAAYRAVAGDLRLTYAQFEELEAFARFGTRLDEETRQVLHRGRRVRAILKQTQSSPRTAPQQVLVLHSLNSGVFDTVDEEALPAAEQAICAAVSEIPEIVDKILQGKTLSQEDLDVMHTVAKRVTRPFIKLGEEGHAGAAGDAT.

176–183 (GDRQTGKT) is an ATP binding site.

The protein belongs to the ATPase alpha/beta chains family. In terms of assembly, F-type ATPases have 2 components, CF(1) - the catalytic core - and CF(0) - the membrane proton channel. CF(1) has five subunits: alpha(3), beta(3), gamma(1), delta(1), epsilon(1). CF(0) has three main subunits: a(1), b(2) and c(9-12). The alpha and beta chains form an alternating ring which encloses part of the gamma chain. CF(1) is attached to CF(0) by a central stalk formed by the gamma and epsilon chains, while a peripheral stalk is formed by the delta and b chains.

Its subcellular location is the cell inner membrane. The enzyme catalyses ATP + H2O + 4 H(+)(in) = ADP + phosphate + 5 H(+)(out). Functionally, produces ATP from ADP in the presence of a proton gradient across the membrane. The alpha chain is a regulatory subunit. The sequence is that of ATP synthase subunit alpha 2 from Syntrophotalea carbinolica (strain DSM 2380 / NBRC 103641 / GraBd1) (Pelobacter carbinolicus).